The chain runs to 140 residues: Ribonuclease P protein component (140 aa).

It belongs to the RnpA family. In terms of assembly, consists of a catalytic RNA component (M1 or rnpB) and a protein subunit.

It catalyses the reaction Endonucleolytic cleavage of RNA, removing 5'-extranucleotides from tRNA precursor.. Functionally, RNaseP catalyzes the removal of the 5'-leader sequence from pre-tRNA to produce the mature 5'-terminus. It can also cleave other RNA substrates such as 4.5S RNA. The protein component plays an auxiliary but essential role in vivo by binding to the 5'-leader sequence and broadening the substrate specificity of the ribozyme. This chain is Ribonuclease P protein component, found in Ralstonia pickettii (strain 12J).